Reading from the N-terminus, the 332-residue chain is Fructose-1,6-bisphosphatase class 1 (332 aa).

Glu89, Asp110, Leu112, and Asp113 together coordinate Mg(2+). Residues 113 to 116, Asn206, Tyr239, 257 to 259, and Lys269 each bind substrate; these read DGSS and YLY. Residue Glu275 coordinates Mg(2+).

The protein belongs to the FBPase class 1 family. Homotetramer. Mg(2+) is required as a cofactor.

It localises to the cytoplasm. The enzyme catalyses beta-D-fructose 1,6-bisphosphate + H2O = beta-D-fructose 6-phosphate + phosphate. It participates in carbohydrate biosynthesis; gluconeogenesis. The protein is Fructose-1,6-bisphosphatase class 1 of Erwinia tasmaniensis (strain DSM 17950 / CFBP 7177 / CIP 109463 / NCPPB 4357 / Et1/99).